Reading from the N-terminus, the 135-residue chain is uncharacterized protein (135 aa).

Residues 8–123 (PKGKMVLRTL…IFVYVAVDEF (116 aa)) form the HotDog ACOT-type domain.

The protein belongs to the acyl coenzyme A hydrolase family.

This is an uncharacterized protein from Buchnera aphidicola subsp. Baizongia pistaciae (strain Bp).